A 355-amino-acid polypeptide reads, in one-letter code: Uroporphyrinogen decarboxylase (355 aa).

Substrate-binding positions include 27 to 31, D78, Y155, S210, and H328; that span reads RQAGR.

It belongs to the uroporphyrinogen decarboxylase family. As to quaternary structure, homodimer.

The protein localises to the cytoplasm. It carries out the reaction uroporphyrinogen III + 4 H(+) = coproporphyrinogen III + 4 CO2. It functions in the pathway porphyrin-containing compound metabolism; protoporphyrin-IX biosynthesis; coproporphyrinogen-III from 5-aminolevulinate: step 4/4. Functionally, catalyzes the decarboxylation of four acetate groups of uroporphyrinogen-III to yield coproporphyrinogen-III. The protein is Uroporphyrinogen decarboxylase of Pseudomonas fluorescens (strain ATCC BAA-477 / NRRL B-23932 / Pf-5).